Reading from the N-terminus, the 394-residue chain is Bifunctional enzyme Fae/Hps (394 aa).

Positions 1-162 (MEFRIGEALI…YEKDRSFHPF (162 aa)) are formaldehyde-activating enzyme. Histidine 18 serves as the catalytic Proton donor. Substrate is bound by residues aspartate 20, leucine 49, lysine 67, threonine 69, and glutamine 84. The segment at 163 to 394 (VGRKLTKLWD…TDQFRIMTDF (232 aa)) is 3-hexulose-6-phosphate synthase.

This sequence in the N-terminal section; belongs to the formaldehyde-activating enzyme family. It in the C-terminal section; belongs to the HPS/KGPDC family. HPS subfamily.

It catalyses the reaction 5,6,7,8-tetrahydromethanopterin + formaldehyde = 5,10-methylenetetrahydromethanopterin + H2O. The enzyme catalyses D-ribulose 5-phosphate + formaldehyde = D-arabino-hex-3-ulose 6-phosphate. The protein operates within carbohydrate biosynthesis; D-ribose 5-phosphate biosynthesis. Its function is as follows. Catalyzes the condensation of formaldehyde with tetrahydromethanopterin (H(4)MPT) to 5,10-methylenetetrahydromethanopterin. Functionally, catalyzes the reversible formation of ribulose-5-phosphate and formaldehyde from 3-hexulose-6-phosphate. The chain is Bifunctional enzyme Fae/Hps from Archaeoglobus fulgidus (strain ATCC 49558 / DSM 4304 / JCM 9628 / NBRC 100126 / VC-16).